The sequence spans 164 residues: Peroxynitrite isomerase (164 aa).

A GXWXGXG motif is present at residues 21-27; that stretch reads GRWGGRG. Lys-130 and His-156 together coordinate heme b.

It belongs to the nitrobindin family. Homodimer. It depends on heme b as a cofactor.

It catalyses the reaction peroxynitrite = nitrate. It participates in nitrogen metabolism. Heme-binding protein able to scavenge peroxynitrite and to protect free L-tyrosine against peroxynitrite-mediated nitration, by acting as a peroxynitrite isomerase that converts peroxynitrite to nitrate. Therefore, this protein likely plays a role in peroxynitrite sensing and in the detoxification of reactive nitrogen and oxygen species (RNS and ROS, respectively). Is able to bind nitric oxide (NO) in vitro, but may act as a sensor of peroxynitrite levels in vivo. The sequence is that of Peroxynitrite isomerase from Nocardioides sp. (strain ATCC BAA-499 / JS614).